The primary structure comprises 954 residues: Kinesin-like protein KIN-7A (954 aa).

The tract at residues 1–29 (MGVSRPPSTPASKIERTPMSTPTPGGSTR) is disordered. Positions 17–28 (TPMSTPTPGGST) are enriched in low complexity. Positions 34–354 (KIFVTVRVRP…LFFATCAKEV (321 aa)) constitute a Kinesin motor domain. 119–126 (GQTSSGKT) contacts ATP. Coiled-coil stretches lie at residues 363 to 436 (VVSD…GDNQ) and 480 to 588 (LKHE…LVMS). 2 disordered regions span residues 624 to 689 (PNLI…SSVN) and 741 to 762 (GKTN…DGPD). Over residues 630-639 (PCSPLSSSRP) the composition is skewed to low complexity. Basic and acidic residues-rich tracts occupy residues 640–660 (LEPE…EGSE) and 666–681 (KSED…ETPR).

The protein belongs to the TRAFAC class myosin-kinesin ATPase superfamily. Kinesin family. KIN-7 subfamily. As to expression, ubiquitous with a preferential expression in the shoot apical meristem (SAM).

Its function is as follows. May be essential to promote the progression of cytokinesis during node-internode differentiation. The chain is Kinesin-like protein KIN-7A from Oryza sativa subsp. japonica (Rice).